Reading from the N-terminus, the 288-residue chain is Quinate/shikimate dehydrogenase (288 aa).

Substrate contacts are provided by Lys71 and Asp107. NAD(+)-binding positions include 132-135 (AGGA), 155-158 (NRRD), Lys205, 232-235 (CVYN), and Gly255.

This sequence belongs to the shikimate dehydrogenase family. In terms of assembly, homodimer.

It carries out the reaction L-quinate + NAD(+) = 3-dehydroquinate + NADH + H(+). The enzyme catalyses L-quinate + NADP(+) = 3-dehydroquinate + NADPH + H(+). It catalyses the reaction shikimate + NADP(+) = 3-dehydroshikimate + NADPH + H(+). The catalysed reaction is shikimate + NAD(+) = 3-dehydroshikimate + NADH + H(+). It participates in metabolic intermediate biosynthesis; chorismate biosynthesis; chorismate from D-erythrose 4-phosphate and phosphoenolpyruvate: step 4/7. Its function is as follows. The actual biological function of YdiB remains unclear, nor is it known whether 3-dehydroshikimate or quinate represents the natural substrate. Catalyzes the reversible NAD-dependent reduction of both 3-dehydroshikimate (DHSA) and 3-dehydroquinate to yield shikimate (SA) and quinate, respectively. It can use both NAD or NADP for catalysis, however it has higher catalytic efficiency with NAD. In Escherichia coli O157:H7, this protein is Quinate/shikimate dehydrogenase.